The sequence spans 301 residues: Lufaxin (301 aa).

Positions M1–C23 are cleaved as a signal peptide. Intrachain disulfides connect C52–C60, C78–C137, C102–C112, and C258–C265. N262 carries N-linked (GlcNAc...) asparagine glycosylation.

In terms of assembly, interacts with factor Xa. Associates with complement proconvertase C3b-B complex. In terms of tissue distribution, expressed in salivary glands.

It is found in the secreted. Functionally, sand fly salivary protein with antithrombotic, and anti-complement (alternative pathway) activities. Is a slow, tight, non-competitive, and reversible inhibitor of factor Xa (FXa, F10). Is specific for FXa (Kd=3.86 nM) and does not interact with non-activated FX, or all other enzymes tested. In addition, it blocks prothrombinase and increases both prothrombin time and activated partial thromboplastin time. It also prevents protease-activated receptor 2 (F2RL1, PAR2) activation by FXa. In vivo, it abrogates edema formation triggered by injection of FXa in the paw of mice. Moreover, it prevents FeCl(3)-induced carotid artery thrombus formation and prolongs activated partial thromboplastin time ex vivo, implying that it works as an anticoagulant in vivo. It also inhibits the early steps of the alternative pathway of complement by direct binding to the proconvertase C3b-B complex, by inhibiting activation of factor B and consequently the formation of the C3 convertase. The sequence is that of Lufaxin from Lutzomyia longipalpis (Sand fly).